The chain runs to 339 residues: Ribosomal RNA small subunit methyltransferase H (339 aa).

S-adenosyl-L-methionine-binding positions include 40-42, aspartate 58, phenylalanine 85, aspartate 106, and glutamine 113; that span reads GGY.

Belongs to the methyltransferase superfamily. RsmH family.

It is found in the cytoplasm. The catalysed reaction is cytidine(1402) in 16S rRNA + S-adenosyl-L-methionine = N(4)-methylcytidine(1402) in 16S rRNA + S-adenosyl-L-homocysteine + H(+). In terms of biological role, specifically methylates the N4 position of cytidine in position 1402 (C1402) of 16S rRNA. This chain is Ribosomal RNA small subunit methyltransferase H, found in Parvibaculum lavamentivorans (strain DS-1 / DSM 13023 / NCIMB 13966).